The sequence spans 878 residues: Longitudinals lacking protein, isoforms N/O/W/X/Y (878 aa).

In terms of domain architecture, BTB spans Val32 to Gln97. Disordered stretches follow at residues Leu115–Leu200, Ser228–Ser340, and Gln542–Ala583. Low complexity-rich tracts occupy residues Ser162–Pro175, Ser228–Thr251, Thr263–Ser293, Asn329–Ser340, and Gln546–Gln569. A C2H2-type 1; degenerate zinc finger spans residues Tyr709–Glu731. The C2H2-type 2 zinc-finger motif lies at Phe794–His816. The segment at Ser826 to Pro863 is disordered. Over residues Lys831–Asp841 the composition is skewed to polar residues.

As to expression, by stage 11, isoform W, isoform X and isoform Y are expressed throughout the mesoderm, whereas isoform O is expressed in both mesoderm and ectoderm. From stage 15, expression of isoform O expands to all tissues, whereas expression of isoform W, isoform X and isoform Y becomes restricted during later stages; starting from stage 14 to 16, isoform W, isoform X and isoform Y are expressed in muscle. From stages 14 and 15, isoform W and isoform Y are expressed in the gut. For some isoforms, expression is also seen in specific types of cells in the embryo; isoform O is expressed in the ventral furrow at stage 5 and in the dorsal epidermis from stage 7. Isoform Y shows prominent expression in the gonad starting at stage 15.

The protein resides in the nucleus. In terms of biological role, putative transcription factor required for axon growth and guidance in the central and peripheral nervous systems. Repels CNS axons away from the midline by promoting the expression of the midline repellent sli and its receptor robo. In Drosophila melanogaster (Fruit fly), this protein is Longitudinals lacking protein, isoforms N/O/W/X/Y.